The chain runs to 441 residues: tRNA pseudouridine synthase Pus10 (441 aa).

Aspartate 268 (nucleophile) is an active-site residue. Substrate contacts are provided by tyrosine 333 and tyrosine 405.

It belongs to the pseudouridine synthase Pus10 family.

The enzyme catalyses uridine(54) in tRNA = pseudouridine(54) in tRNA. It carries out the reaction uridine(55) in tRNA = pseudouridine(55) in tRNA. Functionally, responsible for synthesis of pseudouridine from uracil-54 and uracil-55 in the psi GC loop of transfer RNAs. The sequence is that of tRNA pseudouridine synthase Pus10 from Thermosphaera aggregans (strain DSM 11486 / M11TL).